A 367-amino-acid polypeptide reads, in one-letter code: Aminomethyltransferase (367 aa).

The protein belongs to the GcvT family. In terms of assembly, the glycine cleavage system is composed of four proteins: P, T, L and H.

It catalyses the reaction N(6)-[(R)-S(8)-aminomethyldihydrolipoyl]-L-lysyl-[protein] + (6S)-5,6,7,8-tetrahydrofolate = N(6)-[(R)-dihydrolipoyl]-L-lysyl-[protein] + (6R)-5,10-methylene-5,6,7,8-tetrahydrofolate + NH4(+). In terms of biological role, the glycine cleavage system catalyzes the degradation of glycine. The protein is Aminomethyltransferase of Mycobacterium bovis (strain ATCC BAA-935 / AF2122/97).